The primary structure comprises 301 residues: Inosose dehydratase (301 aa).

This sequence belongs to the IolE/MocC family. Glutathione serves as cofactor. The cofactor is Co(2+). Requires Mn(2+) as cofactor.

The enzyme catalyses scyllo-inosose = 3D-3,5/4-trihydroxycyclohexane-1,2-dione + H2O. In terms of biological role, catalyzes the dehydration of inosose (2-keto-myo-inositol, 2KMI or 2,4,6/3,5-pentahydroxycyclohexanone) to 3D-(3,5/4)-trihydroxycyclohexane-1,2-dione (D-2,3-diketo-4-deoxy-epi-inositol). The chain is Inosose dehydratase from Salmonella typhimurium (strain LT2 / SGSC1412 / ATCC 700720).